The sequence spans 149 residues: Ribonuclease H (149 aa).

The region spanning Met1–Ala142 is the RNase H type-1 domain. Residues Asp9, Glu47, Asp70, and Asp134 each coordinate Mg(2+). A disordered region spans residues His124–Pro149. Residues Gly129–Pro149 show a composition bias toward basic and acidic residues.

Belongs to the RNase H family. In terms of assembly, monomer. Mg(2+) is required as a cofactor.

It localises to the cytoplasm. It carries out the reaction Endonucleolytic cleavage to 5'-phosphomonoester.. Functionally, endonuclease that specifically degrades the RNA of RNA-DNA hybrids. In Maricaulis maris (strain MCS10) (Caulobacter maris), this protein is Ribonuclease H.